The primary structure comprises 526 residues: Glucose-6-phosphate isomerase (526 aa).

Residue E323 is the Proton donor of the active site. Residues H352 and K454 contribute to the active site.

Belongs to the GPI family.

The protein resides in the cytoplasm. It catalyses the reaction alpha-D-glucose 6-phosphate = beta-D-fructose 6-phosphate. It participates in carbohydrate biosynthesis; gluconeogenesis. Its pathway is carbohydrate degradation; glycolysis; D-glyceraldehyde 3-phosphate and glycerone phosphate from D-glucose: step 2/4. Its function is as follows. Catalyzes the reversible isomerization of glucose-6-phosphate to fructose-6-phosphate. This chain is Glucose-6-phosphate isomerase, found in Prochlorococcus marinus subsp. pastoris (strain CCMP1986 / NIES-2087 / MED4).